We begin with the raw amino-acid sequence, 455 residues long: Ribulose bisphosphate carboxylase large chain (455 aa).

The residue at position 5 (K5) is an N6,N6,N6-trimethyllysine. Substrate is bound by residues N114 and T164. K166 serves as the catalytic Proton acceptor. K168 is a binding site for substrate. Positions 192, 194, and 195 each coordinate Mg(2+). The residue at position 192 (K192) is an N6-carboxylysine. H285 serves as the catalytic Proton acceptor. The substrate site is built by R286, H318, and S370.

The protein belongs to the RuBisCO large chain family. Type I subfamily. Heterohexadecamer of 8 large chains and 8 small chains; disulfide-linked. The disulfide link is formed within the large subunit homodimers. Requires Mg(2+) as cofactor. The disulfide bond which can form in the large chain dimeric partners within the hexadecamer appears to be associated with oxidative stress and protein turnover.

It localises to the plastid. Its subcellular location is the chloroplast. The catalysed reaction is 2 (2R)-3-phosphoglycerate + 2 H(+) = D-ribulose 1,5-bisphosphate + CO2 + H2O. The enzyme catalyses D-ribulose 1,5-bisphosphate + O2 = 2-phosphoglycolate + (2R)-3-phosphoglycerate + 2 H(+). Its function is as follows. RuBisCO catalyzes two reactions: the carboxylation of D-ribulose 1,5-bisphosphate, the primary event in carbon dioxide fixation, as well as the oxidative fragmentation of the pentose substrate in the photorespiration process. Both reactions occur simultaneously and in competition at the same active site. This chain is Ribulose bisphosphate carboxylase large chain, found in Lupinus albus (White lupine).